The chain runs to 147 residues: MSTISAKPAEVVHEWFVIDATDKVLGRVASEVALRLRGKHKAIYTPHVDTGDFIVIINAARIKVTGTKSLDKVYYRHSGYPGGITAVNFRDMQARHPGRALEKAVKGMLPKGPLGYAMIKKLKVYGGPEHPHSAQQPKVLEIQGAAR.

Positions 127 to 147 are disordered; the sequence is GPEHPHSAQQPKVLEIQGAAR.

Belongs to the universal ribosomal protein uL13 family. As to quaternary structure, part of the 50S ribosomal subunit.

This protein is one of the early assembly proteins of the 50S ribosomal subunit, although it is not seen to bind rRNA by itself. It is important during the early stages of 50S assembly. The polypeptide is Large ribosomal subunit protein uL13 (Verminephrobacter eiseniae (strain EF01-2)).